The chain runs to 260 residues: ATP-dependent zinc metalloprotease FTSH, chloroplastic (260 aa).

H219 provides a ligand contact to Zn(2+). Residue E220 is part of the active site. Zn(2+) is bound at residue H223.

The protein in the N-terminal section; belongs to the AAA ATPase family. In the C-terminal section; belongs to the peptidase M41 family. Zn(2+) is required as a cofactor.

Its subcellular location is the plastid. It is found in the chloroplast thylakoid membrane. Functionally, probable ATP-dependent zinc metallopeptidase. This chain is ATP-dependent zinc metalloprotease FTSH, chloroplastic, found in Helianthus annuus (Common sunflower).